Here is a 574-residue protein sequence, read N- to C-terminus: Urease subunit alpha (574 aa).

Positions 131-574 constitute a Urease domain; that stretch reads GAIDSHIHFI…LPMAQRYLLI (444 aa). Ni(2+)-binding residues include His-136, His-138, and Lys-219. N6-carboxylysine is present on Lys-219. Substrate is bound at residue His-221. Ni(2+) is bound by residues His-248 and His-274. Residue His-322 is the Proton donor of the active site. Residue Asp-362 participates in Ni(2+) binding.

This sequence belongs to the metallo-dependent hydrolases superfamily. Urease alpha subunit family. In terms of assembly, heterotrimer of UreA (gamma), UreB (beta) and UreC (alpha) subunits. Three heterotrimers associate to form the active enzyme. Ni cation is required as a cofactor. Post-translationally, carboxylation allows a single lysine to coordinate two nickel ions.

The protein localises to the cytoplasm. It carries out the reaction urea + 2 H2O + H(+) = hydrogencarbonate + 2 NH4(+). Its pathway is nitrogen metabolism; urea degradation; CO(2) and NH(3) from urea (urease route): step 1/1. The protein is Urease subunit alpha of Prochlorococcus marinus (strain MIT 9303).